The primary structure comprises 372 residues: Glutamate 5-kinase (372 aa).

Position 14 (Lys14) interacts with ATP. Substrate contacts are provided by Ser54, Asp141, and Asn153. 173–174 (TD) contributes to the ATP binding site. Residues 280-358 (RGTLVLDAGA…DAIESILGYS (79 aa)) enclose the PUA domain.

It belongs to the glutamate 5-kinase family.

It is found in the cytoplasm. The enzyme catalyses L-glutamate + ATP = L-glutamyl 5-phosphate + ADP. It functions in the pathway amino-acid biosynthesis; L-proline biosynthesis; L-glutamate 5-semialdehyde from L-glutamate: step 1/2. Catalyzes the transfer of a phosphate group to glutamate to form L-glutamate 5-phosphate. The sequence is that of Glutamate 5-kinase from Pseudomonas putida (strain GB-1).